A 503-amino-acid chain; its full sequence is Transcriptional regulator LovE (503 aa).

Positions 35–67 (CDRCHAQKIKCTGNKEVTGRAPCQRCQQAGLRC) form a DNA-binding region, zn(2)-C6 fungal-type. Disordered regions lie at residues 89 to 124 (ADPDPCLHMSSPPVPSQSLPLDVSESHSSNTSRQFL) and 331 to 358 (SHMSPLEGSRSQSPSRDDTSSSSGHSSV). Over residues 339 to 357 (SRSQSPSRDDTSSSSGHSS) the composition is skewed to low complexity.

It localises to the nucleus. Transcription factor that regulates the expression of the he gene cluster that mediates the biosynthesis of lovastatin (also known as mevinolin, mevacor or monacolin K), a hypolipidemic inhibitor of (3S)-hydroxymethylglutaryl-coenzyme A (HMG-CoA) reductase (HMGR). The protein is Transcriptional regulator LovE of Aspergillus terreus.